Here is a 665-residue protein sequence, read N- to C-terminus: Coiled-coil domain-containing protein 138 (665 aa).

Threonine 48 is modified (phosphothreonine). Serine 49 carries the phosphoserine modification. Residues 198–323 (QQKFAEELQK…YEFMTIQRLK (126 aa)) adopt a coiled-coil conformation. Position 469 is a phosphoserine (serine 469).

The polypeptide is Coiled-coil domain-containing protein 138 (CCDC138) (Homo sapiens (Human)).